The sequence spans 291 residues: Protease HtpX homolog (291 aa).

The next 2 membrane-spanning stretches (helical) occupy residues 11–31 (INTFLILFVFILACGGFGLLA) and 34–54 (FLGMSFFLFILLLAAGYACVQ). Position 140 (histidine 140) interacts with Zn(2+). The active site involves glutamate 141. Histidine 144 contacts Zn(2+). Transmembrane regions (helical) follow at residues 155–175 (IVFGLVSAVGLISDMVLRALI) and 186–206 (AFSFAIVLFFSLLAPIAAMLV). Position 215 (glutamate 215) interacts with Zn(2+).

This sequence belongs to the peptidase M48B family. The cofactor is Zn(2+).

It is found in the cell membrane. In Tropheryma whipplei (strain TW08/27) (Whipple's bacillus), this protein is Protease HtpX homolog.